A 762-amino-acid chain; its full sequence is Phosphoribosylformylglycinamidine synthase subunit PurL (762 aa).

The active site involves H58. Residues Y61 and R105 each contribute to the ATP site. Residue E107 coordinates Mg(2+). Substrate-binding positions include 108-111 (SHNH) and R130. The Proton acceptor role is filled by H109. D131 is a Mg(2+) binding site. Substrate is bound at residue Q255. D283 serves as a coordination point for Mg(2+). 327–329 (ESQ) contacts substrate. ATP contacts are provided by N513 and G550. N551 lines the Mg(2+) pocket. Residue S553 participates in substrate binding.

This sequence belongs to the FGAMS family. As to quaternary structure, monomer. Part of the FGAM synthase complex composed of 1 PurL, 1 PurQ and 2 PurS subunits.

The protein localises to the cytoplasm. The catalysed reaction is N(2)-formyl-N(1)-(5-phospho-beta-D-ribosyl)glycinamide + L-glutamine + ATP + H2O = 2-formamido-N(1)-(5-O-phospho-beta-D-ribosyl)acetamidine + L-glutamate + ADP + phosphate + H(+). It participates in purine metabolism; IMP biosynthesis via de novo pathway; 5-amino-1-(5-phospho-D-ribosyl)imidazole from N(2)-formyl-N(1)-(5-phospho-D-ribosyl)glycinamide: step 1/2. In terms of biological role, part of the phosphoribosylformylglycinamidine synthase complex involved in the purines biosynthetic pathway. Catalyzes the ATP-dependent conversion of formylglycinamide ribonucleotide (FGAR) and glutamine to yield formylglycinamidine ribonucleotide (FGAM) and glutamate. The FGAM synthase complex is composed of three subunits. PurQ produces an ammonia molecule by converting glutamine to glutamate. PurL transfers the ammonia molecule to FGAR to form FGAM in an ATP-dependent manner. PurS interacts with PurQ and PurL and is thought to assist in the transfer of the ammonia molecule from PurQ to PurL. The sequence is that of Phosphoribosylformylglycinamidine synthase subunit PurL from Corynebacterium glutamicum (strain R).